The following is a 711-amino-acid chain: Putative membrane protein ActII-3 (711 aa).

12 consecutive transmembrane segments (helical) span residues Leu-14–Gly-34, Ala-175–Tyr-195, Leu-199–Val-219, Ala-235–Ala-255, Ala-281–Leu-301, Val-313–Phe-333, Ala-369–Asn-389, Ile-516–Val-536, Leu-540–Phe-560, Phe-573–Val-593, Ala-623–Ala-643, and Leu-645–Val-665. Residues Arg-685 to Arg-711 form a disordered region.

This sequence belongs to the resistance-nodulation-cell division (RND) (TC 2.A.6) family. MmpL subfamily.

Its subcellular location is the cell membrane. The chain is Putative membrane protein ActII-3 (actII-3) from Streptomyces coelicolor (strain ATCC BAA-471 / A3(2) / M145).